A 314-amino-acid polypeptide reads, in one-letter code: Protein SPOROCYTELESS (314 aa).

Over residues 1–17 the composition is skewed to polar residues; the sequence is MATSLFFMSTDQNSVGN. 2 disordered regions span residues 1-20 and 33-62; these read MATSLFFMSTDQNSVGNPND and GEIRTETLKSRGRKPGSKTGQQKQKKPTLR. The short motif at 62–70 is the SPL element; the sequence is RGMGVAKLE. Positions 308–314 match the EAR motif; the sequence is IDLSLKL.

The protein belongs to the NOZZLE family. Homodimer and heterodimer with SPEARs. Interacts in vitro with YAB1, YAB3 and YAB4. Interacts (via EAR motif) with TPL, TPR1, TPR2, TPR3 and TPR4. Interacts with SPEAR1, SPEAR2, SPEAR3, SPEAR4, TCP1, TCP6, TCP8, TCP9, TCP11, TCP15, TCP20, TCP21 and TCP23. Interacts with TCP2, TCP3, TCP4, TCP5, TCP10, TCP13, TCP17 and TCP24. Expressed in flower buds. Not found in leaves, siliques and stems. Detected in rosette leaves, stem tissue and seedlings.

The protein localises to the nucleus. Functionally, transcriptional regulator of sporocyte development. Acts as an adapter-like transcriptional repressor recruiting TPL/TPR corepressors to inhibit TCP transcription factors. Required for nucellus and embryo sac development. Plays a central role in patterning both the proximal-distal and the adaxial-abaxial axes during ovule development. Involved in establishing the prospective chalaza of the ovule and in controlling the cell number and the length of the funiculus, and is required for the development of the integuments. Required, with BEL1, for cytokinin-induced PIN1 expression in ovules. Involved in controlling stamen identity. May also regulate the morphology of lateral organs by repressing auxin production. This is Protein SPOROCYTELESS from Arabidopsis thaliana (Mouse-ear cress).